The sequence spans 459 residues: Putrescine aminotransferase (459 aa).

Pyridoxal 5'-phosphate is bound by residues 150–151 and Gln274; that span reads GT. The residue at position 300 (Lys300) is an N6-(pyridoxal phosphate)lysine. Residue Thr332 participates in pyridoxal 5'-phosphate binding.

The protein belongs to the class-III pyridoxal-phosphate-dependent aminotransferase family. Putrescine aminotransferase subfamily. Pyridoxal 5'-phosphate serves as cofactor.

The catalysed reaction is an alkane-alpha,omega-diamine + 2-oxoglutarate = an omega-aminoaldehyde + L-glutamate. It catalyses the reaction putrescine + 2-oxoglutarate = 1-pyrroline + L-glutamate + H2O. It carries out the reaction cadaverine + 2-oxoglutarate = 5-aminopentanal + L-glutamate. It participates in amine and polyamine degradation; putrescine degradation; 4-aminobutanal from putrescine (transaminase route): step 1/1. Catalyzes the aminotransferase reaction from putrescine to 2-oxoglutarate, leading to glutamate and 4-aminobutanal, which spontaneously cyclizes to form 1-pyrroline. This is the first step in one of two pathways for putrescine degradation, where putrescine is converted into 4-aminobutanoate (gamma-aminobutyrate or GABA) via 4-aminobutanal. Also functions as a cadaverine transaminase in a a L-lysine degradation pathway to succinate that proceeds via cadaverine, glutarate and L-2-hydroxyglutarate. The polypeptide is Putrescine aminotransferase (Escherichia coli (strain ATCC 8739 / DSM 1576 / NBRC 3972 / NCIMB 8545 / WDCM 00012 / Crooks)).